The primary structure comprises 317 residues: Methionyl-tRNA formyltransferase (317 aa).

112–115 contacts (6S)-5,6,7,8-tetrahydrofolate; the sequence is SLLP.

The protein belongs to the Fmt family.

The catalysed reaction is L-methionyl-tRNA(fMet) + (6R)-10-formyltetrahydrofolate = N-formyl-L-methionyl-tRNA(fMet) + (6S)-5,6,7,8-tetrahydrofolate + H(+). Attaches a formyl group to the free amino group of methionyl-tRNA(fMet). The formyl group appears to play a dual role in the initiator identity of N-formylmethionyl-tRNA by promoting its recognition by IF2 and preventing the misappropriation of this tRNA by the elongation apparatus. The sequence is that of Methionyl-tRNA formyltransferase from Mesorhizobium japonicum (strain LMG 29417 / CECT 9101 / MAFF 303099) (Mesorhizobium loti (strain MAFF 303099)).